A 323-amino-acid polypeptide reads, in one-letter code: Galactosylgalactosylxylosylprotein 3-beta-glucuronosyltransferase 2 (323 aa).

Residues 1-2 (MK) lie on the Cytoplasmic side of the membrane. Residues 3–23 (SALFTRFFILLPWILIVIIML) form a helical; Signal-anchor for type II membrane protein membrane-spanning segment. The Lumenal portion of the chain corresponds to 24-323 (DVDTRRPVPP…YHLDTVKIEV (300 aa)). The interval 51-80 (RLPLRRGGPAHGTQKRNQSRPQPQPEPQLP) is disordered. Asn-67 carries an N-linked (GlcNAc...) asparagine glycan. UDP-alpha-D-glucuronate contacts are provided by residues 87-89 (PTY), Asp-118, Arg-155, Arg-160, and 185-187 (DDD). Asp-187 lines the Mn(2+) pocket. Positions 234-243 (WRADRPFAID) are interaction with galactose moiety of substrate glycoprotein. The active-site Proton donor/acceptor is Glu-273. The N-linked (GlcNAc...) asparagine glycan is linked to Asn-292. 300 to 302 (HTR) serves as a coordination point for UDP-alpha-D-glucuronate.

This sequence belongs to the glycosyltransferase 43 family. In terms of assembly, homodimer. Mn(2+) is required as a cofactor. As to expression, expressed in the trachea, retina, spinal cord, hippocampus and other brain regions, and, at lower levels, in testis and ovary.

It is found in the golgi apparatus membrane. It carries out the reaction 3-O-(beta-D-galactosyl-(1-&gt;3)-beta-D-galactosyl-(1-&gt;4)-beta-D-xylosyl)-L-seryl-[protein] + UDP-alpha-D-glucuronate = 3-O-(beta-D-GlcA-(1-&gt;3)-beta-D-Gal-(1-&gt;3)-beta-D-Gal-(1-&gt;4)-beta-D-Xyl)-L-seryl-[protein] + UDP + H(+). It functions in the pathway protein modification; protein glycosylation. In terms of biological role, involved in the biosynthesis of L2/HNK-1 carbohydrate epitope on both glycolipids and glycoproteins. In Homo sapiens (Human), this protein is Galactosylgalactosylxylosylprotein 3-beta-glucuronosyltransferase 2 (B3GAT2).